Consider the following 298-residue polypeptide: NFU1 iron-sulfur cluster scaffold homolog, mitochondrial (298 aa).

Residues Ile190 to Val258 are nifU. [4Fe-4S] cluster is bound by residues Cys227 and Cys230. Positions Gln279–Ala288 are enriched in polar residues. Residues Gln279–Asn298 are disordered.

It belongs to the NifU family.

Its subcellular location is the mitochondrion. In terms of biological role, molecular scaffold for [Fe-S] cluster assembly of mitochondrial iron-sulfur proteins. In Drosophila virilis (Fruit fly), this protein is NFU1 iron-sulfur cluster scaffold homolog, mitochondrial.